A 134-amino-acid polypeptide reads, in one-letter code: D-ribose pyranase (134 aa).

Catalysis depends on histidine 20, which acts as the Proton donor. Residues aspartate 28, histidine 101, and 123–125 (YCN) contribute to the substrate site.

Belongs to the RbsD / FucU family. RbsD subfamily. In terms of assembly, homodecamer.

It localises to the cytoplasm. The enzyme catalyses beta-D-ribopyranose = beta-D-ribofuranose. It functions in the pathway carbohydrate metabolism; D-ribose degradation; D-ribose 5-phosphate from beta-D-ribopyranose: step 1/2. Catalyzes the interconversion of beta-pyran and beta-furan forms of D-ribose. This Pseudomonas fluorescens (strain ATCC BAA-477 / NRRL B-23932 / Pf-5) protein is D-ribose pyranase.